Here is a 407-residue protein sequence, read N- to C-terminus: Tryptophan synthase beta chain (407 aa).

Lys-91 bears the N6-(pyridoxal phosphate)lysine mark.

Belongs to the TrpB family. As to quaternary structure, tetramer of two alpha and two beta chains. Pyridoxal 5'-phosphate is required as a cofactor.

It carries out the reaction (1S,2R)-1-C-(indol-3-yl)glycerol 3-phosphate + L-serine = D-glyceraldehyde 3-phosphate + L-tryptophan + H2O. Its pathway is amino-acid biosynthesis; L-tryptophan biosynthesis; L-tryptophan from chorismate: step 5/5. In terms of biological role, the beta subunit is responsible for the synthesis of L-tryptophan from indole and L-serine. In Streptococcus pneumoniae (strain P1031), this protein is Tryptophan synthase beta chain.